Here is a 349-residue protein sequence, read N- to C-terminus: Outer membrane protein assembly factor BamC (349 aa).

The first 24 residues, 1 to 24 (MAILLQKSKVMKIAGMSLAMLLAA), serve as a signal peptide directing secretion. Residue C25 is the site of N-palmitoyl cysteine attachment. C25 is lipidated: S-diacylglycerol cysteine.

This sequence belongs to the BamC family. As to quaternary structure, part of the Bam complex, which is composed of the outer membrane protein BamA, and four lipoproteins BamB, BamC, BamD and BamE.

It is found in the cell outer membrane. Its function is as follows. Part of the outer membrane protein assembly complex, which is involved in assembly and insertion of beta-barrel proteins into the outer membrane. The chain is Outer membrane protein assembly factor BamC from Photorhabdus asymbiotica subsp. asymbiotica (strain ATCC 43949 / 3105-77) (Xenorhabdus luminescens (strain 2)).